The primary structure comprises 395 residues: Protein phosphatase methylesterase 1 (395 aa).

Residues serine 194, aspartate 222, and histidine 348 contribute to the active site.

The protein belongs to the AB hydrolase superfamily.

It catalyses the reaction [phosphatase 2A protein]-C-terminal L-leucine methyl ester + H2O = [phosphatase 2A protein]-C-terminal L-leucine + methanol + H(+). Demethylates proteins that have been reversibly carboxymethylated. Demethylates the phosphatase PP2A catalytic subunit. This Kluyveromyces lactis (strain ATCC 8585 / CBS 2359 / DSM 70799 / NBRC 1267 / NRRL Y-1140 / WM37) (Yeast) protein is Protein phosphatase methylesterase 1 (PPE1).